The following is a 372-amino-acid chain: Glutamate 5-kinase (372 aa).

Lysine 14 serves as a coordination point for ATP. Serine 54, aspartate 141, and asparagine 153 together coordinate substrate. Residues threonine 173–aspartate 174 and threonine 215–lysine 221 each bind ATP. The 79-residue stretch at arginine 280–aspartate 358 folds into the PUA domain.

The protein belongs to the glutamate 5-kinase family.

The protein localises to the cytoplasm. The catalysed reaction is L-glutamate + ATP = L-glutamyl 5-phosphate + ADP. It functions in the pathway amino-acid biosynthesis; L-proline biosynthesis; L-glutamate 5-semialdehyde from L-glutamate: step 1/2. In terms of biological role, catalyzes the transfer of a phosphate group to glutamate to form L-glutamate 5-phosphate. This is Glutamate 5-kinase from Shewanella pealeana (strain ATCC 700345 / ANG-SQ1).